The primary structure comprises 1394 residues: DNA-directed RNA polymerase subunit beta (1394 aa).

This sequence belongs to the RNA polymerase beta chain family. In terms of assembly, the RNAP catalytic core consists of 2 alpha, 1 beta, 1 beta' and 1 omega subunit. When a sigma factor is associated with the core the holoenzyme is formed, which can initiate transcription.

It carries out the reaction RNA(n) + a ribonucleoside 5'-triphosphate = RNA(n+1) + diphosphate. In terms of biological role, DNA-dependent RNA polymerase catalyzes the transcription of DNA into RNA using the four ribonucleoside triphosphates as substrates. The sequence is that of DNA-directed RNA polymerase subunit beta from Anaplasma phagocytophilum (Ehrlichia phagocytophila).